A 348-amino-acid polypeptide reads, in one-letter code: Mediator of RNA polymerase II transcription subunit 18 (348 aa).

Residues 152 to 218 show a composition bias toward basic and acidic residues; sequence MDVDLEHKDK…KNDEVKHSEV (67 aa). Residues 152–227 are disordered; it reads MDVDLEHKDK…VNLEDGAETG (76 aa). Positions 167–223 form a coiled coil; that stretch reads DTKEKEEDKKEEDKKEEDKKEEDKKEEDKKEEDKKEEEKVEKKNDEVKHSEVNLEDG.

This sequence belongs to the Mediator complex subunit 18 family. As to quaternary structure, component of the Mediator complex.

The protein localises to the nucleus. Functionally, component of the Mediator complex, a coactivator involved in the regulated transcription of nearly all RNA polymerase II-dependent genes. Mediator functions as a bridge to convey information from gene-specific regulatory proteins to the basal RNA polymerase II transcription machinery. Mediator is recruited to promoters by direct interactions with regulatory proteins and serves as a scaffold for the assembly of a functional preinitiation complex with RNA polymerase II and the general transcription factors. In Scheffersomyces stipitis (strain ATCC 58785 / CBS 6054 / NBRC 10063 / NRRL Y-11545) (Yeast), this protein is Mediator of RNA polymerase II transcription subunit 18 (SRB5).